Here is a 246-residue protein sequence, read N- to C-terminus: Bacteriorhodopsin-II-like protein (246 aa).

7 consecutive transmembrane segments (helical) span residues 7–27 (EATW…YFAV), 45–65 (TLIP…LGVI), 82–102 (YADW…VAGA), 107–127 (LYKL…GSMM), 135–155 (IVWW…LLGE), 182–202 (WALY…IIAV), and 205–225 (EIML…AVLL). At Lys217 the chain carries N6-(retinylidene)lysine.

The protein belongs to the archaeal/bacterial/fungal opsin family. The covalent binding of retinal to the apoprotein, bacterioopsin, generates bacteriorhodopsin.

It localises to the cell membrane. In terms of biological role, has no proton-pumping activity but is potentially capable of functioning as a sensory SRII-like protein. The chromophore contains 36.5% all-trans-, 7.6% 11-cis- and 56.4% 13-cis-retinal in the dark and 30.1% 11-cis- and 47.7% 13-cis-retinal upon illumination with &gt;460 nm light. The chain is Bacteriorhodopsin-II-like protein (bop2) from Haloquadratum walsbyi (strain DSM 16790 / HBSQ001).